The sequence spans 921 residues: Probable glucan 1,3-alpha-glucosidase (921 aa).

An N-terminal signal peptide occupies residues 1–20 (MRSLLFVLSLICFCSQTALS). Asp512 (nucleophile) is an active-site residue. Glu515 is an active-site residue. Asp588 acts as the Proton donor in catalysis. Asn689 and Asn804 each carry an N-linked (GlcNAc...) asparagine glycan.

The protein belongs to the glycosyl hydrolase 31 family. Heterodimer of a catalytic alpha subunit (PSL5) and a beta subunit (PSL4). As to expression, expressed in roots, rosette leaves, leaf blades, mature stems, cauline leaves, flower buds, flowers and siliques.

Its subcellular location is the endoplasmic reticulum. It carries out the reaction Hydrolysis of terminal (1-&gt;3)-alpha-D-glucosidic links in (1-&gt;3)-alpha-D-glucans.. Its pathway is glycan metabolism; N-glycan metabolism. In terms of biological role, cleaves sequentially the 2 innermost alpha-1,3-linked glucose residues from the Glc(2)Man(9)GlcNAc(2) oligosaccharide precursor of immature glycoproteins. Essential for stable accumulation of the receptor EFR that determines the specific perception of bacterial elongation factor Tu (EF-Tu), a potent elicitor of the defense response to pathogen-associated molecular patterns (PAMPs). Required for sustained activation of EFR-mediated signaling, but not receptor FLS2-mediated signaling elicited by the bacterial flagellin flg22. In Arabidopsis thaliana (Mouse-ear cress), this protein is Probable glucan 1,3-alpha-glucosidase (PSL5).